Reading from the N-terminus, the 95-residue chain is Aspartyl/glutamyl-tRNA(Asn/Gln) amidotransferase subunit C (95 aa).

The protein belongs to the GatC family. Heterotrimer of A, B and C subunits.

The enzyme catalyses L-glutamyl-tRNA(Gln) + L-glutamine + ATP + H2O = L-glutaminyl-tRNA(Gln) + L-glutamate + ADP + phosphate + H(+). The catalysed reaction is L-aspartyl-tRNA(Asn) + L-glutamine + ATP + H2O = L-asparaginyl-tRNA(Asn) + L-glutamate + ADP + phosphate + 2 H(+). Allows the formation of correctly charged Asn-tRNA(Asn) or Gln-tRNA(Gln) through the transamidation of misacylated Asp-tRNA(Asn) or Glu-tRNA(Gln) in organisms which lack either or both of asparaginyl-tRNA or glutaminyl-tRNA synthetases. The reaction takes place in the presence of glutamine and ATP through an activated phospho-Asp-tRNA(Asn) or phospho-Glu-tRNA(Gln). In Chelativorans sp. (strain BNC1), this protein is Aspartyl/glutamyl-tRNA(Asn/Gln) amidotransferase subunit C.